The primary structure comprises 181 residues: Resolvase/recombinase (181 aa).

Residues 2-137 (RLFGYARVST…EGRLEAKAKG (136 aa)) enclose the Resolvase/invertase-type recombinase catalytic domain. Serine 10 serves as the catalytic O-(5'-phospho-DNA)-serine intermediate. The segment at residues 161-180 (AMEIAKRLKIGRSTVYKVLA) is a DNA-binding region (H-T-H motif).

This sequence belongs to the site-specific recombinase resolvase family.

Site-specific recombination protein. The chain is Resolvase/recombinase from Pseudomonas putida (Arthrobacter siderocapsulatus).